Consider the following 281-residue polypeptide: sn-glycerol-3-phosphate transport system permease protein UgpE (281 aa).

6 helical membrane-spanning segments follow: residues 16 to 36, 85 to 105, 113 to 133, 142 to 162, 202 to 222, and 247 to 267; these read LILG…AATL, FSIT…IVWF, FFWM…FPTV, LDSY…TFLF, ALFV…LLII, and WNSV…IVLV. The ABC transmembrane type-1 domain occupies 77–268; it reads LLNSFVMAFS…IPPVVIVLVM (192 aa).

It belongs to the binding-protein-dependent transport system permease family. UgpAE subfamily. As to quaternary structure, the complex is composed of two ATP-binding proteins (UgpC), two transmembrane proteins (UgpA and UgpE) and a solute-binding protein (UgpB).

The protein resides in the cell inner membrane. Functionally, part of the ABC transporter complex UgpBAEC involved in sn-glycerol-3-phosphate (G3P) import. Probably responsible for the translocation of the substrate across the membrane. Can also transport glycerophosphoryl diesters, which are hydrolyzed to G3P and alcohol during transport. The G3P moiety can be detected in the cytoplasm whereas the corresponding alcohol is usually found in the culture medium. It was proposed by Yang et al that the complex could also transport glycerol-2-phosphate (G2P) in vivo, but it was shown later by Wuttge et al that UgpB does not bind G2P, questioning this transport activity. G2P might be converted in the periplasm to G3P before its transport. The polypeptide is sn-glycerol-3-phosphate transport system permease protein UgpE (Escherichia coli (strain K12)).